The chain runs to 82 residues: Defensin-like protein 208 (82 aa).

The first 29 residues, 1–29 (MAKNLNTVSFTVLLLVLLMASTGILETEA), serve as a signal peptide directing secretion. 3 disulfide bridges follow: C38–C63, C50–C76, and C54–C78.

The protein belongs to the DEFL family.

The protein resides in the secreted. This chain is Defensin-like protein 208, found in Arabidopsis thaliana (Mouse-ear cress).